A 477-amino-acid polypeptide reads, in one-letter code: Glutamyl-tRNA(Gln) amidotransferase subunit A (477 aa).

Active-site charge relay system residues include lysine 76 and serine 151. The active-site Acyl-ester intermediate is serine 175.

This sequence belongs to the amidase family. GatA subfamily. In terms of assembly, heterotrimer of A, B and C subunits.

It catalyses the reaction L-glutamyl-tRNA(Gln) + L-glutamine + ATP + H2O = L-glutaminyl-tRNA(Gln) + L-glutamate + ADP + phosphate + H(+). Allows the formation of correctly charged Gln-tRNA(Gln) through the transamidation of misacylated Glu-tRNA(Gln) in organisms which lack glutaminyl-tRNA synthetase. The reaction takes place in the presence of glutamine and ATP through an activated gamma-phospho-Glu-tRNA(Gln). This Chlorobium phaeobacteroides (strain BS1) protein is Glutamyl-tRNA(Gln) amidotransferase subunit A.